A 493-amino-acid polypeptide reads, in one-letter code: Geraniol 8-hydroxylase (493 aa).

Residues Met-1 to Ile-6 lie on the Lumenal side of the membrane. A helical transmembrane segment spans residues Ile-7–Leu-23. The Cytoplasmic portion of the chain corresponds to Ser-24 to Leu-493. Cys-436 contacts heme.

This sequence belongs to the cytochrome P450 family. It depends on heme as a cofactor. As to expression, expressed in roots, stems, leaves and flower buds. Hardly detected in mature flowers and fruits. Expressed in the internal phloem-associated parenchyma.

Its subcellular location is the endoplasmic reticulum membrane. It catalyses the reaction (2E)-geraniol + reduced [NADPH--hemoprotein reductase] + O2 = (6E)-8-hydroxygeraniol + oxidized [NADPH--hemoprotein reductase] + H2O + H(+). Its function is as follows. Hydroxylase involved in the biosynthesis of hydroxygeraniol, a precursor of the terpenoid indole alkaloids such as vinblastine and vincristine. Also able to hydroxylate in vitro nerol and to catalyze 3'-hydroxylation of the flavanone naringenin to form eriodictyol. No activity with apigenin, kaempferol, p-coumaric acid and ferulic acid as substrates. The protein is Geraniol 8-hydroxylase (CYP76B6) of Catharanthus roseus (Madagascar periwinkle).